The primary structure comprises 275 residues: Large ribosomal subunit protein uL2 (275 aa).

The disordered stretch occupies residues 222 to 275 (GVAMNPVDHPHGGGEGRNKGRHPTSPWGQKSKGLKTRHNKRTDNMIIRRRAKKK). Residues 229–239 (DHPHGGGEGRN) are compositionally biased toward basic and acidic residues.

The protein belongs to the universal ribosomal protein uL2 family. In terms of assembly, part of the 50S ribosomal subunit. Forms a bridge to the 30S subunit in the 70S ribosome.

One of the primary rRNA binding proteins. Required for association of the 30S and 50S subunits to form the 70S ribosome, for tRNA binding and peptide bond formation. It has been suggested to have peptidyltransferase activity; this is somewhat controversial. Makes several contacts with the 16S rRNA in the 70S ribosome. The protein is Large ribosomal subunit protein uL2 of Psychrobacter cryohalolentis (strain ATCC BAA-1226 / DSM 17306 / VKM B-2378 / K5).